Here is a 478-residue protein sequence, read N- to C-terminus: Sulfate adenylyltransferase subunit 1 (478 aa).

One can recognise a tr-type G domain in the interval 28 to 244; that stretch reads KTMLRFLTCG…LESVDVVNAS (217 aa). The interval 37–44 is G1; sequence GSVDDGKS. Position 37-44 (37-44) interacts with GTP; sequence GSVDDGKS. The interval 95–99 is G2; it reads GITID. A G3 region spans residues 116 to 119; sequence DTPG. GTP-binding positions include 116-120 and 171-174; these read DTPGH and NKMD. The tract at residues 171–174 is G4; sequence NKMD. The G5 stretch occupies residues 209–211; the sequence is SAL.

Belongs to the TRAFAC class translation factor GTPase superfamily. Classic translation factor GTPase family. CysN/NodQ subfamily. As to quaternary structure, heterodimer composed of CysD, the smaller subunit, and CysN.

It carries out the reaction sulfate + ATP + H(+) = adenosine 5'-phosphosulfate + diphosphate. It participates in sulfur metabolism; hydrogen sulfide biosynthesis; sulfite from sulfate: step 1/3. Its function is as follows. With CysD forms the ATP sulfurylase (ATPS) that catalyzes the adenylation of sulfate producing adenosine 5'-phosphosulfate (APS) and diphosphate, the first enzymatic step in sulfur assimilation pathway. APS synthesis involves the formation of a high-energy phosphoric-sulfuric acid anhydride bond driven by GTP hydrolysis by CysN coupled to ATP hydrolysis by CysD. This is Sulfate adenylyltransferase subunit 1 from Yersinia enterocolitica serotype O:8 / biotype 1B (strain NCTC 13174 / 8081).